Consider the following 389-residue polypeptide: Transcription factor MYB97 (389 aa).

HTH myb-type domains lie at 16-68 (GVVL…ANHL) and 69-123 (RPNL…KRFQ). 2 consecutive DNA-binding regions (H-T-H motif) follow at residues 44-68 (WNSVQKKTWLARCGKSCRLRWANHL) and 96-119 (WARMAAQLPGRTDNEIKNYWNTRL). The interval 131–159 (PPEYSQNNHQQQMYPQQPSSPLPSQTPAS) is disordered. The span at 140–159 (QQQMYPQQPSSPLPSQTPAS) shows a compositional bias: low complexity.

Accumulates in pollen grains and pollen tube. Mostly expressed in mature pollen grains, and, to a lower extent, in inflorescences and siliques.

It is found in the nucleus. Transcription activator. Binds to 5'-CAACTGTC-3' and/or 5'-TAACAAA-3' motif in target gene promoter to promote their expression. Together with MYB101 and MYB120, functions as a male factor that controls pollen tube-synergid interaction in fertilization. Required for pollen tube growth arrest and sperm cell release in the female gametophyte, probably via the regulation of pollen tube-specific gene expression. In Arabidopsis thaliana (Mouse-ear cress), this protein is Transcription factor MYB97.